The following is a 233-amino-acid chain: MLTYDNWEEPTITFPEDDPYKGALSVLKWAYGHYGDQLVYACSFGIEGIVLIDLIYKVKKDAEIVFLDTGLHFKETYETIERVKERYPGLNIILKKPDLTLEEQAEEHGDKLWEREPNQCCYLRKVVPLREALSGHPAWLSGLRRDQGPSRANTNFLNKDEKFKSVKVCPLIHWTWKDIWRYTSRNELDYNPLHDQGYPSIGCAPCTSPAFTAEDLRSGRWNGMAKTECGLHE.

The [4Fe-4S] cluster site is built by Cys120, Cys121, Cys203, and Cys206. Catalysis depends on Cys229, which acts as the Nucleophile; cysteine thiosulfonate intermediate.

Belongs to the PAPS reductase family. CysH subfamily. Requires [4Fe-4S] cluster as cofactor.

The protein localises to the cytoplasm. The catalysed reaction is [thioredoxin]-disulfide + sulfite + AMP + 2 H(+) = adenosine 5'-phosphosulfate + [thioredoxin]-dithiol. Its pathway is sulfur metabolism; hydrogen sulfide biosynthesis; sulfite from sulfate. Functionally, catalyzes the formation of sulfite from adenosine 5'-phosphosulfate (APS) using thioredoxin as an electron donor. This chain is Adenosine 5'-phosphosulfate reductase 1 (cysH), found in Bacillus subtilis (strain 168).